The sequence spans 411 residues: Argininosuccinate synthase (411 aa).

ATP is bound at residue 11–19 (AYSGGLDTS). Tyr88 is a binding site for L-citrulline. An ATP-binding site is contributed by Gly118. Thr120, Asn124, and Asp125 together coordinate L-aspartate. Asn124 is a binding site for L-citrulline. Residues Arg128, Ser176, Glu261, and Tyr273 each coordinate L-citrulline.

It belongs to the argininosuccinate synthase family. Type 1 subfamily. Homotetramer.

Its subcellular location is the cytoplasm. The enzyme catalyses L-citrulline + L-aspartate + ATP = 2-(N(omega)-L-arginino)succinate + AMP + diphosphate + H(+). It participates in amino-acid biosynthesis; L-arginine biosynthesis; L-arginine from L-ornithine and carbamoyl phosphate: step 2/3. The polypeptide is Argininosuccinate synthase (Lactiplantibacillus plantarum (strain ATCC BAA-793 / NCIMB 8826 / WCFS1) (Lactobacillus plantarum)).